The sequence spans 72 residues: Putative snRNP Sm-like protein (72 aa).

Residues 4–72 (RPLDILNNAL…RGDNVVYVSP (69 aa)) form the Sm domain.

It belongs to the snRNP Sm proteins family.

This chain is Putative snRNP Sm-like protein, found in Methanosarcina acetivorans (strain ATCC 35395 / DSM 2834 / JCM 12185 / C2A).